The primary structure comprises 335 residues: Anthranilate phosphoribosyltransferase (335 aa).

5-phospho-alpha-D-ribose 1-diphosphate-binding positions include G79, 82–83, T87, 89–92, 107–115, and S119; these read GD, NVST, and KHGSRSVSS. G79 contacts anthranilate. Residue S91 participates in Mg(2+) binding. R165 lines the anthranilate pocket. Positions 223 and 224 each coordinate Mg(2+).

The protein belongs to the anthranilate phosphoribosyltransferase family. As to quaternary structure, homodimer. Mg(2+) is required as a cofactor.

The enzyme catalyses N-(5-phospho-beta-D-ribosyl)anthranilate + diphosphate = 5-phospho-alpha-D-ribose 1-diphosphate + anthranilate. It functions in the pathway amino-acid biosynthesis; L-tryptophan biosynthesis; L-tryptophan from chorismate: step 2/5. In terms of biological role, catalyzes the transfer of the phosphoribosyl group of 5-phosphorylribose-1-pyrophosphate (PRPP) to anthranilate to yield N-(5'-phosphoribosyl)-anthranilate (PRA). The polypeptide is Anthranilate phosphoribosyltransferase (Helicobacter pylori (strain HPAG1)).